We begin with the raw amino-acid sequence, 258 residues long: UPF0246 protein PM0066 (258 aa).

It belongs to the UPF0246 family.

In Pasteurella multocida (strain Pm70), this protein is UPF0246 protein PM0066.